The primary structure comprises 669 residues: 5-taurinomethyluridine-[tRNA] synthase subunit MTO1, mitochondrial (669 aa).

A mitochondrion-targeting transit peptide spans 1-25 (MFLLRGRGHWAAASLGRRLPLRRLR). FAD contacts are provided by residues 42-47 (GGGHAG), V154, S217, and Q406. The residue at position 507 (K507) is an N6-methyllysine.

This sequence belongs to the MnmG family. As to quaternary structure, homodimer; forms a dimer in the presence of potassium. Interacts with GTPBP3; forms the GTPBP3-MTO1 complex composed of homodimers of GTPBP3 and MTO1. FAD serves as cofactor. In terms of tissue distribution, ubiquitously expressed in various tissues, but with markedly elevated expression in tissues of high metabolic rates.

It is found in the mitochondrion. The enzyme catalyses 5,10-methylenetetrahydrofolate + uridine(34) in tRNA + taurine + GTP + A + H2O = 5-taurinomethyluridine(34) in tRNA + 7,8-dihydrofolate + GDP + AH2 + phosphate + H(+). Component of the GTPBP3-MTO1 complex that catalyzes the 5-taurinomethyluridine (taum(5)U) modification at the 34th wobble position (U34) of mitochondrial tRNAs (mt-tRNAs), which plays a role in mt-tRNA decoding and mitochondrial translation. Taum(5)U formation on mammalian mt-tRNA requires the presence of both GTPBP3-mediated GTPase activity and MTO1 catalytic activity. The sequence is that of 5-taurinomethyluridine-[tRNA] synthase subunit MTO1, mitochondrial from Mus musculus (Mouse).